Reading from the N-terminus, the 360-residue chain is F420-dependent hydroxymycolic acid dehydrogenase (360 aa).

A signal peptide (tat-type signal) is located at residues 1–40 (MTGISRRTFGLAAGFGAIGAGGLGGGCSTRSGPTPTPEPA). Coenzyme F420-(gamma-Glu)n is bound at residue Asp77. His78 acts as the Proton donor in catalysis. 145-146 (TG) is a binding site for coenzyme F420-(gamma-Glu)n. Glu147 serves as the catalytic Proton acceptor. Coenzyme F420-(gamma-Glu)n-binding positions include Asn150 and 213–214 (SG).

This sequence belongs to the F420-dependent hydroxymycolic acid dehydrogenase family. Homodimer. Post-translationally, is exported by the Tat system. The position of the signal peptide cleavage has not been experimentally proven. May be lipidated.

The protein localises to the cell envelope. The protein operates within lipid metabolism; mycolic acid biosynthesis. Is inhibited by the anti-tuberculous drug PA-824, a bicyclic 4-nitroimidazole class compound. Therefore, this is consistent with the finding that PA-824 inhibits the formation of K-MAs and causes an accumulation of hydroxymycolic acids (H-MAs) in M.tuberculosis. Its function is as follows. Catalyzes the coenzyme F420-dependent oxidation of hydroxymycolic acids (H-MAs) to ketomycolic acids (K-MAs), a lipid class making up the mycobacterial pseudo-outer membrane and over one-third of the dry weight of M.tuberculosis. Does not exhibit F420-dependent glucose-6-phosphate dehydrogenase (FGD) activity. In Mycobacterium tuberculosis (strain ATCC 25618 / H37Rv), this protein is F420-dependent hydroxymycolic acid dehydrogenase.